A 351-amino-acid polypeptide reads, in one-letter code: Ferredoxin--NADP reductase (351 aa).

FAD contacts are provided by aspartate 44, glutamine 52, tyrosine 57, isoleucine 97, phenylalanine 132, aspartate 296, and serine 337.

It belongs to the ferredoxin--NADP reductase type 2 family. Homodimer. It depends on FAD as a cofactor.

It catalyses the reaction 2 reduced [2Fe-2S]-[ferredoxin] + NADP(+) + H(+) = 2 oxidized [2Fe-2S]-[ferredoxin] + NADPH. The sequence is that of Ferredoxin--NADP reductase from Burkholderia vietnamiensis (strain G4 / LMG 22486) (Burkholderia cepacia (strain R1808)).